The following is a 179-amino-acid chain: Vi polysaccharide biosynthesis protein TviA (179 aa).

It participates in glycan metabolism; Vi-antigen biosynthesis. The protein operates within capsule biogenesis; capsule polysaccharide biosynthesis. The protein is Vi polysaccharide biosynthesis protein TviA (tviA) of Salmonella typhi.